The following is a 96-amino-acid chain: Small ribosomal subunit protein uS15 (96 aa).

This sequence belongs to the universal ribosomal protein uS15 family. Part of the 30S ribosomal subunit. Forms a bridge to the 50S subunit in the 70S ribosome, contacting the 23S rRNA.

Functionally, one of the primary rRNA binding proteins, it binds directly to 16S rRNA where it helps nucleate assembly of the platform of the 30S subunit by binding and bridging several RNA helices of the 16S rRNA. Forms an intersubunit bridge (bridge B4) with the 23S rRNA of the 50S subunit in the ribosome. This Streptomyces griseus subsp. griseus (strain JCM 4626 / CBS 651.72 / NBRC 13350 / KCC S-0626 / ISP 5235) protein is Small ribosomal subunit protein uS15.